Reading from the N-terminus, the 195-residue chain is Large ribosomal subunit protein uL18 (195 aa).

It belongs to the universal ribosomal protein uL18 family. In terms of assembly, part of the 50S ribosomal subunit. Contacts the 5S and 23S rRNAs.

Functionally, this is one of the proteins that bind and probably mediate the attachment of the 5S RNA into the large ribosomal subunit, where it forms part of the central protuberance. This is Large ribosomal subunit protein uL18 from Nanoarchaeum equitans (strain Kin4-M).